A 255-amino-acid polypeptide reads, in one-letter code: Hydroxyacylglutathione hydrolase (255 aa).

Positions 56, 58, 60, 61, 114, 133, and 171 each coordinate Zn(2+).

Belongs to the metallo-beta-lactamase superfamily. Glyoxalase II family. As to quaternary structure, monomer. Zn(2+) serves as cofactor.

The enzyme catalyses an S-(2-hydroxyacyl)glutathione + H2O = a 2-hydroxy carboxylate + glutathione + H(+). It functions in the pathway secondary metabolite metabolism; methylglyoxal degradation; (R)-lactate from methylglyoxal: step 2/2. Functionally, thiolesterase that catalyzes the hydrolysis of S-D-lactoyl-glutathione to form glutathione and D-lactic acid. The polypeptide is Hydroxyacylglutathione hydrolase (Bradyrhizobium diazoefficiens (strain JCM 10833 / BCRC 13528 / IAM 13628 / NBRC 14792 / USDA 110)).